Consider the following 374-residue polypeptide: UPF0754 membrane protein SAR1937 (374 aa).

2 helical membrane-spanning segments follow: residues Leu4 to Ile24 and Ser354 to Val374.

Belongs to the UPF0754 family.

Its subcellular location is the cell membrane. This is UPF0754 membrane protein SAR1937 from Staphylococcus aureus (strain MRSA252).